Here is a 572-residue protein sequence, read N- to C-terminus: Urease subunit alpha (572 aa).

Residues 134-572 form the Urease domain; it reads GGIDSHIHFI…LPMTQRYFLF (439 aa). 3 residues coordinate Ni(2+): H139, H141, and K222. The residue at position 222 (K222) is an N6-carboxylysine. H224 is a substrate binding site. Ni(2+) contacts are provided by H251 and H277. The active-site Proton donor is H325. Residue D365 participates in Ni(2+) binding.

This sequence belongs to the metallo-dependent hydrolases superfamily. Urease alpha subunit family. As to quaternary structure, heterotrimer of UreA (gamma), UreB (beta) and UreC (alpha) subunits. Three heterotrimers associate to form the active enzyme. Requires Ni cation as cofactor. In terms of processing, carboxylation allows a single lysine to coordinate two nickel ions.

Its subcellular location is the cytoplasm. The catalysed reaction is urea + 2 H2O + H(+) = hydrogencarbonate + 2 NH4(+). Its pathway is nitrogen metabolism; urea degradation; CO(2) and NH(3) from urea (urease route): step 1/1. The chain is Urease subunit alpha from Polaromonas sp. (strain JS666 / ATCC BAA-500).